The sequence spans 119 residues: Large ribosomal subunit protein bL20 (119 aa).

This sequence belongs to the bacterial ribosomal protein bL20 family.

In terms of biological role, binds directly to 23S ribosomal RNA and is necessary for the in vitro assembly process of the 50S ribosomal subunit. It is not involved in the protein synthesizing functions of that subunit. The protein is Large ribosomal subunit protein bL20 of Nitrosococcus oceani (strain ATCC 19707 / BCRC 17464 / JCM 30415 / NCIMB 11848 / C-107).